Reading from the N-terminus, the 319-residue chain is Transaldolase (319 aa).

K132 functions as the Schiff-base intermediate with substrate in the catalytic mechanism.

This sequence belongs to the transaldolase family. Type 1 subfamily. Homodimer.

Its subcellular location is the cytoplasm. It carries out the reaction D-sedoheptulose 7-phosphate + D-glyceraldehyde 3-phosphate = D-erythrose 4-phosphate + beta-D-fructose 6-phosphate. Its pathway is carbohydrate degradation; pentose phosphate pathway; D-glyceraldehyde 3-phosphate and beta-D-fructose 6-phosphate from D-ribose 5-phosphate and D-xylulose 5-phosphate (non-oxidative stage): step 2/3. Transaldolase is important for the balance of metabolites in the pentose-phosphate pathway. In Alteromonas mediterranea (strain DSM 17117 / CIP 110805 / LMG 28347 / Deep ecotype), this protein is Transaldolase.